The following is a 281-amino-acid chain: Acetyl-coenzyme A carboxylase carboxyl transferase subunit beta (281 aa).

The 259-residue stretch at Leu-23 to Gly-281 folds into the CoA carboxyltransferase N-terminal domain. 4 residues coordinate Zn(2+): Cys-27, Cys-30, Cys-46, and Cys-49. A C4-type zinc finger spans residues Cys-27 to Cys-49.

Belongs to the AccD/PCCB family. In terms of assembly, acetyl-CoA carboxylase is a heterohexamer composed of biotin carboxyl carrier protein (AccB), biotin carboxylase (AccC) and two subunits each of ACCase subunit alpha (AccA) and ACCase subunit beta (AccD). Zn(2+) is required as a cofactor.

It localises to the cytoplasm. It catalyses the reaction N(6)-carboxybiotinyl-L-lysyl-[protein] + acetyl-CoA = N(6)-biotinyl-L-lysyl-[protein] + malonyl-CoA. The protein operates within lipid metabolism; malonyl-CoA biosynthesis; malonyl-CoA from acetyl-CoA: step 1/1. Component of the acetyl coenzyme A carboxylase (ACC) complex. Biotin carboxylase (BC) catalyzes the carboxylation of biotin on its carrier protein (BCCP) and then the CO(2) group is transferred by the transcarboxylase to acetyl-CoA to form malonyl-CoA. This Chlorobium luteolum (strain DSM 273 / BCRC 81028 / 2530) (Pelodictyon luteolum) protein is Acetyl-coenzyme A carboxylase carboxyl transferase subunit beta.